A 483-amino-acid chain; its full sequence is Essential nuclear protein 1 (483 aa).

Disordered regions lie at residues 1–21 (MARA…LKDL), 33–55 (KKKL…GYID), 67–123 (KEQQ…EGDY), and 171–200 (ESQV…GLKS). Acidic residues predominate over residues 96–123 (YDDEDEDEDEDEEAFGEDISDFEPEGDY). Serine 172 is modified (phosphoserine; by ATM or ATR). The segment covering 174-183 (VEDMQDDEPL) has biased composition (acidic residues). The segment covering 185–198 (NEQNTSRGNISSGL) has biased composition (polar residues). Phosphoserine occurs at positions 190 and 404.

Belongs to the bystin family.

It is found in the cytoplasm. It localises to the nucleus. The protein localises to the nucleolus. Functionally, required for normal export of the pre-40S particles from the nucleus to the cytoplasm. Its subcellular location and association with pre-40S subunit shifts from mixed cytoplasm/nucleus to all nuclear in RPS19 disruptions, suggesting it acts after the ribosomal protein. This chain is Essential nuclear protein 1 (ENP1), found in Saccharomyces cerevisiae (strain ATCC 204508 / S288c) (Baker's yeast).